We begin with the raw amino-acid sequence, 313 residues long: Porphobilinogen deaminase (313 aa).

C242 is modified (S-(dipyrrolylmethanemethyl)cysteine).

Belongs to the HMBS family. Monomer. It depends on dipyrromethane as a cofactor.

The catalysed reaction is 4 porphobilinogen + H2O = hydroxymethylbilane + 4 NH4(+). It functions in the pathway porphyrin-containing compound metabolism; protoporphyrin-IX biosynthesis; coproporphyrinogen-III from 5-aminolevulinate: step 2/4. Functionally, tetrapolymerization of the monopyrrole PBG into the hydroxymethylbilane pre-uroporphyrinogen in several discrete steps. The protein is Porphobilinogen deaminase of Yersinia enterocolitica serotype O:8 / biotype 1B (strain NCTC 13174 / 8081).